A 1012-amino-acid chain; its full sequence is Alanine--tRNA ligase, mitochondrial (1012 aa).

A mitochondrion-targeting transit peptide spans 1 to 24 (MYNSAKQLQRVLTAREIRKTFLDH). Zn(2+)-binding residues include His-656, His-660, Cys-766, and His-770.

This sequence belongs to the class-II aminoacyl-tRNA synthetase family. Monomer. Requires Zn(2+) as cofactor.

It localises to the mitochondrion. The enzyme catalyses tRNA(Ala) + L-alanine + ATP = L-alanyl-tRNA(Ala) + AMP + diphosphate. Functionally, catalyzes the attachment of alanine to tRNA(Ala) in a two-step reaction: alanine is first activated by ATP to form Ala-AMP and then transferred to the acceptor end of tRNA(Ala). Also edits incorrectly charged tRNA(Ala) via its editing domain. The polypeptide is Alanine--tRNA ligase, mitochondrial (Drosophila melanogaster (Fruit fly)).